We begin with the raw amino-acid sequence, 105 residues long: Phosphoribosyl-AMP cyclohydrolase (105 aa).

Position 72 (aspartate 72) interacts with Mg(2+). Cysteine 73 is a Zn(2+) binding site. Mg(2+)-binding residues include aspartate 74 and aspartate 76. Residues cysteine 89 and cysteine 96 each contribute to the Zn(2+) site.

This sequence belongs to the PRA-CH family. As to quaternary structure, homodimer. The cofactor is Mg(2+). Zn(2+) is required as a cofactor.

It localises to the cytoplasm. It catalyses the reaction 1-(5-phospho-beta-D-ribosyl)-5'-AMP + H2O = 1-(5-phospho-beta-D-ribosyl)-5-[(5-phospho-beta-D-ribosylamino)methylideneamino]imidazole-4-carboxamide. Its pathway is amino-acid biosynthesis; L-histidine biosynthesis; L-histidine from 5-phospho-alpha-D-ribose 1-diphosphate: step 3/9. Catalyzes the hydrolysis of the adenine ring of phosphoribosyl-AMP. The protein is Phosphoribosyl-AMP cyclohydrolase of Listeria innocua serovar 6a (strain ATCC BAA-680 / CLIP 11262).